The sequence spans 492 residues: Virion host shutoff protein (492 aa).

Disordered stretches follow at residues 110-130 (EEAS…SRPS), 143-165 (FAPG…GAPS), 288-307 (SQAR…LESM), and 334-369 (EDDY…PPEL). A compositionally biased stretch (low complexity) spans 144–165 (APGDRGTRAAGPGPAAPSGAPS).

This sequence belongs to the herpesviridae VHS protein family. Interacts with human EIF4H, EIF4A1 and EIF4A2; interaction with eIF4AI and EIF4A2 presumably allows Vhs protein to associate with the eIF4F cap-binding complex.

It is found in the virion. In terms of biological role, minor structural protein that acts as an endoribonuclease during lytic infection. Degrades host mRNAs in the cytoplasm by cutting them at preferred sites, including some in regions of translation initiation. Together with inhibition of host splicing by ICP27, contributes to an overall decrease in host protein synthesis. Also, after the onset of viral transcription, accelerates the turnover of viral mRNA, thereby facilitating the sequential expression of different classes of viral genes. Binds translation initiation factors eIF4H, eIF4AI, and eIF4AII, thereby may interact directly with the translation initiation complex and thus digest specifically mRNAs. Also impedes antigen presentation by major histocompatibility complex class I and class II molecules, inhibits secretion of cytokines that would otherwise recruit lymphocytes and neutrophils cells to the site of infection and blocks the activation of dendritic cells. Impedes the alpha/beta interferon-mediated response to infection. Inhibits the integrated stress response (ISR) in the infected cell, this function requires the endonuclease activity. Stress granule formation is thus inhibited, which allows protein synthesis and viral replication. This chain is Virion host shutoff protein (UL41), found in Human herpesvirus 2 (strain G) (HHV-2).